The following is a 123-amino-acid chain: MPTINQLVRKGRVPQKAKSKVPAMEQNPQKRGVCTRVYTTTPKKPNSALRKVAKVRLTNQREVISYIPGEGHNLQEHSVVLIRGGRVRDLPGVRYHVLRGVLDTQGVKDRKQSRSKYGAKRPK.

The tract at residues 1 to 29 is disordered; the sequence is MPTINQLVRKGRVPQKAKSKVPAMEQNPQ. The segment covering 9–19 has biased composition (basic residues); the sequence is RKGRVPQKAKS. D89 bears the 3-methylthioaspartic acid mark.

Belongs to the universal ribosomal protein uS12 family. In terms of assembly, part of the 30S ribosomal subunit. Contacts proteins S8 and S17. May interact with IF1 in the 30S initiation complex.

In terms of biological role, with S4 and S5 plays an important role in translational accuracy. Functionally, interacts with and stabilizes bases of the 16S rRNA that are involved in tRNA selection in the A site and with the mRNA backbone. Located at the interface of the 30S and 50S subunits, it traverses the body of the 30S subunit contacting proteins on the other side and probably holding the rRNA structure together. The combined cluster of proteins S8, S12 and S17 appears to hold together the shoulder and platform of the 30S subunit. This is Small ribosomal subunit protein uS12 from Erythrobacter litoralis (strain HTCC2594).